Here is a 121-residue protein sequence, read N- to C-terminus: LOB domain-containing protein 24 (121 aa).

In terms of domain architecture, LOB spans 4-105; the sequence is KRCAACKYLR…NELAKTQAEI (102 aa).

The protein belongs to the LOB domain-containing protein family.

The chain is LOB domain-containing protein 24 (LBD24) from Arabidopsis thaliana (Mouse-ear cress).